The following is a 238-amino-acid chain: Aerobic respiration control protein ArcA (238 aa).

The Response regulatory domain maps to 5 to 118 (HILIVEDELV…ELTIRARNLL (114 aa)). D54 carries the post-translational modification 4-aspartylphosphate. A DNA-binding region (ompR/PhoB-type) is located at residues 134-234 (VESYKFNGWE…IHGEGYRFCG (101 aa)).

Post-translationally, phosphorylated by ArcB.

Its subcellular location is the cytoplasm. Member of the two-component regulatory system ArcB/ArcA. Represses a wide variety of aerobic enzymes under anaerobic conditions. It may also be involved in the osmoregulation of envelope proteins. When activated by ArcB, it negatively regulates the expression of genes of aerobic function. Activates the transcription of the plfB operon by binding to its promoter. This is Aerobic respiration control protein ArcA (arcA) from Escherichia coli O157:H7.